Here is a 383-residue protein sequence, read N- to C-terminus: MLASYASDPLKSRGRLYKEIPTYYRNEFERDRDRIIHTNAFRRLQYKTQVFINHEGDHYRNRLTHSLEVSTVARSVANTLNLSSDLAETIALAHDLGHTPFGHAGERALNECMKEYHGFSHNSQSLKILTLLEKRYAAYNGVNLTWEVLEGIVKHNGPILGAINEYVAEYNKQNDLELSTYASAEAQVASLADDISYISHDLEDSIGAKIIDFDSLAELQYIDNYVFELKAKFKDISPSCLIYEVVRKLIHELITDLLWQTKENLNKEKITNIDEIRNLHYPIVDFTEKTNERINEIKKFLHKRVYESNKMIAISIKCTKIVQGLFKIYMDDINLLPTNWKILIDSNKTYSKARVIADYIAGMTDRFAIQEYNQLCSPNFNNI.

An HD domain is found at 62–198 (RLTHSLEVST…ASLADDISYI (137 aa)).

This sequence belongs to the dGTPase family. Type 2 subfamily.

The sequence is that of Deoxyguanosinetriphosphate triphosphohydrolase-like protein from Rickettsia prowazekii (strain Madrid E).